A 519-amino-acid polypeptide reads, in one-letter code: Aldehyde dehydrogenase, mitochondrial (519 aa).

A mitochondrion-targeting transit peptide spans 1-19 (MLRAALSTARRGPRLSRLL). The SIFI-degron signature appears at 12 to 26 (GPRLSRLLSAAATSA). N6-acetyllysine occurs at positions 54, 75, 80, and 161. 264–269 (GSTEVG) contributes to the NAD(+) binding site. Glu-287 functions as the Proton acceptor in the catalytic mechanism. Cys-321 acts as the Nucleophile in catalysis. N6-acetyllysine occurs at positions 370, 377, 385, 409, 428, 430, 443, and 453.

This sequence belongs to the aldehyde dehydrogenase family. In terms of assembly, homotetramer. In response to mitochondrial stress, the precursor protein is ubiquitinated by the SIFI complex in the cytoplasm before mitochondrial import, leading to its degradation. Within the SIFI complex, UBR4 initiates ubiquitin chain that are further elongated or branched by KCMF1.

It localises to the mitochondrion matrix. It carries out the reaction an aldehyde + NAD(+) + H2O = a carboxylate + NADH + 2 H(+). Its pathway is alcohol metabolism; ethanol degradation; acetate from ethanol: step 2/2. Functionally, required for clearance of cellular formaldehyde, a cytotoxic and carcinogenic metabolite that induces DNA damage. The chain is Aldehyde dehydrogenase, mitochondrial (Aldh2) from Rattus norvegicus (Rat).